A 432-amino-acid polypeptide reads, in one-letter code: Chaperone SurA (432 aa).

An N-terminal signal peptide occupies residues 1 to 26; that stretch reads MKKIASFCSAAVLIASSFLLNNTVQA. PpiC domains lie at 176 to 277 and 286 to 386; these read QTEY…KVQD and VQEV…EVTG.

The protein localises to the periplasm. The enzyme catalyses [protein]-peptidylproline (omega=180) = [protein]-peptidylproline (omega=0). In terms of biological role, chaperone involved in the correct folding and assembly of outer membrane proteins. Recognizes specific patterns of aromatic residues and the orientation of their side chains, which are found more frequently in integral outer membrane proteins. May act in both early periplasmic and late outer membrane-associated steps of protein maturation. The sequence is that of Chaperone SurA from Idiomarina loihiensis (strain ATCC BAA-735 / DSM 15497 / L2-TR).